A 158-amino-acid chain; its full sequence is Cytochrome b562 (158 aa).

4 helical membrane-spanning segments follow: residues 12–32, 46–66, 87–107, and 121–141; these read ITLH…GETM, AGVG…LTLV, VAAG…ALGM, and HVLA…SALF. Heme b contacts are provided by H15 and H53. Heme b is bound by residues H121 and H135.

Belongs to the cytochrome b561 family. As to quaternary structure, homodimer. The cofactor is heme b.

Its subcellular location is the cell membrane. Functionally, cytochrome b562 is an integral component of the cytochrome b-c1 complex in the cyclic electron transfer system of photosynthetic bacteria. The chain is Cytochrome b562 from Cereibacter sphaeroides (strain ATCC 17023 / DSM 158 / JCM 6121 / CCUG 31486 / LMG 2827 / NBRC 12203 / NCIMB 8253 / ATH 2.4.1.) (Rhodobacter sphaeroides).